The primary structure comprises 144 residues: MPGGKGKSSGGKSSGGKTSGTEGANKKQQSHSARAGLQFPCGRVKRFLKQNTQQKMRVGAKAAVYVTAVLEYLTAEVLELAGNAAKDLKVKRITPRHLQLAIRGDEELDTLIRATIAYGGVLPHINRALLLKVEQKKKAKALEG.

Gly residues predominate over residues 1-18 (MPGGKGKSSGGKSSGGKT). Residues 1–36 (MPGGKGKSSGGKSSGGKTSGTEGANKKQQSHSARAG) form a disordered region. Residues Lys5 and Lys12 each carry the N6-acetyllysine modification.

The protein belongs to the histone H2A family. In terms of assembly, the nucleosome is a histone octamer containing two molecules each of H2A, H2B, H3 and H4 assembled in one H3-H4 heterotetramer and two H2A-H2B heterodimers. The octamer wraps approximately 147 bp of DNA. H2A or its variant H2A.Z forms a heterodimer with H2B. H2A.Z associates with the VPS72/SWC2 subunit of the SWR1 chromatin remodeling complex. Also interacts with RBP1/DNA-directed RNA polymerase II largest subunit. Acetylated once deposited into chromatin.

The protein resides in the nucleus. Its subcellular location is the chromosome. In terms of biological role, variant histone H2A which can replace H2A in some nucleosomes. Nucleosomes wrap and compact DNA into chromatin, limiting DNA accessibility to the cellular machineries which require DNA as a template. Histones thereby play a central role in transcription regulation, DNA repair, DNA replication and chromosomal stability. DNA accessibility is regulated via a complex set of post-translational modifications of histones, also called histone code, and nucleosome remodeling. This variant is enriched at promoters, it may keep them in a repressed state until the appropriate activation signal is received. Near telomeres, it may counteract gene silencing caused by the spread of heterochromatin proteins. Required for the RNA polymerase II and SPT15/TBP recruitment to the target genes. Involved in chromosome stability. The polypeptide is Histone H2A.Z (HTZ1) (Gibberella zeae (strain ATCC MYA-4620 / CBS 123657 / FGSC 9075 / NRRL 31084 / PH-1) (Wheat head blight fungus)).